The sequence spans 293 residues: Neugrin (293 aa).

The signal sequence occupies residues 1-18; that stretch reads MALSLSLFLGGRVRTSLA. Serine 41 bears the Phosphoserine mark. Disordered regions lie at residues 177-210 and 224-254; these read DEVSSKSQNHSTALKVAKSHPHSTDAQKKREGRD and TTALGHQRELQKSATSDSEATGRAGSDTLPS. Asparagine 185 is a glycosylation site (N-linked (GlcNAc...) asparagine). Positions 198-210 are enriched in basic and acidic residues; the sequence is HSTDAQKKREGRD.

The protein belongs to the neugrin family. Forms a regulatory protein-RNA complex, consisting of RCC1L, NGRN, RPUSD3, RPUSD4, TRUB2, FASTKD2 and 16S mt-rRNA. Interacts with 16S mt-rRNA; this interaction is direct. Expressed in heart, brain, liver and kidney. In brain, mainly expressed in neurons rather than glial cells.

The protein resides in the nucleus. It is found in the secreted. It localises to the mitochondrion membrane. Plays an essential role in mitochondrial ribosome biogenesis. As a component of a functional protein-RNA module, consisting of RCC1L, NGRN, RPUSD3, RPUSD4, TRUB2, FASTKD2 and 16S mitochondrial ribosomal RNA (16S mt-rRNA), controls 16S mt-rRNA abundance and is required for intra-mitochondrial translation of core subunits of the oxidative phosphorylation system. This is Neugrin (Ngrn) from Mus musculus (Mouse).